The sequence spans 348 residues: S-adenosylmethionine:tRNA ribosyltransferase-isomerase (348 aa).

The protein belongs to the QueA family. In terms of assembly, monomer.

Its subcellular location is the cytoplasm. It carries out the reaction 7-aminomethyl-7-carbaguanosine(34) in tRNA + S-adenosyl-L-methionine = epoxyqueuosine(34) in tRNA + adenine + L-methionine + 2 H(+). Its pathway is tRNA modification; tRNA-queuosine biosynthesis. Transfers and isomerizes the ribose moiety from AdoMet to the 7-aminomethyl group of 7-deazaguanine (preQ1-tRNA) to give epoxyqueuosine (oQ-tRNA). This is S-adenosylmethionine:tRNA ribosyltransferase-isomerase from Polynucleobacter necessarius subsp. necessarius (strain STIR1).